Here is a 311-residue protein sequence, read N- to C-terminus: F-box protein At3g18320 (311 aa).

The F-box domain maps to 1–46 (MTLPELPKDLVEEILCFVPATSLKRLRSTCKGWNRLFKDDKRFARK).

This chain is F-box protein At3g18320, found in Arabidopsis thaliana (Mouse-ear cress).